Consider the following 180-residue polypeptide: UPF0303 protein PSEEN3311 (180 aa).

It belongs to the UPF0303 family.

This Pseudomonas entomophila (strain L48) protein is UPF0303 protein PSEEN3311.